Reading from the N-terminus, the 681-residue chain is Potassium-transporting ATPase ATP-binding subunit 1 (681 aa).

4 helical membrane passes run 30–50 (LLVYVGAILATSLYFLGFFGI), 59–79 (LAIALILWFTVLFANFAEAIA), 216–236 (ILLVTLSIIFLAVSATLLPFT), and 255–275 (IALLVCLAPTTIGALLSSIGI). Aspartate 306 serves as the catalytic 4-aspartylphosphate intermediate. ATP contacts are provided by residues aspartate 343, glutamate 347, 376 to 383 (FTATTRMS), and lysine 394. Mg(2+) is bound by residues aspartate 517 and aspartate 521. The next 3 helical transmembrane spans lie at 587–607 (FAIIPVLFYGIFPQLEALNLM), 615–635 (AILSAIIYNAVIIIFLIPLSL), and 661–681 (LIAPFIAIKLIDMLLTVLGIV).

It belongs to the cation transport ATPase (P-type) (TC 3.A.3) family. Type IA subfamily. In terms of assembly, the system is composed of three essential subunits: KdpA, KdpB and KdpC.

It is found in the cell membrane. The enzyme catalyses K(+)(out) + ATP + H2O = K(+)(in) + ADP + phosphate + H(+). In terms of biological role, part of the high-affinity ATP-driven potassium transport (or Kdp) system, which catalyzes the hydrolysis of ATP coupled with the electrogenic transport of potassium into the cytoplasm. This subunit is responsible for energy coupling to the transport system and for the release of the potassium ions to the cytoplasm. The protein is Potassium-transporting ATPase ATP-binding subunit 1 of Listeria innocua serovar 6a (strain ATCC BAA-680 / CLIP 11262).